The primary structure comprises 352 residues: C-C chemokine receptor type 5 (352 aa).

Residues 1–30 (MDYQVSSPTYDIDYYTSEPCQKVNVKQIAA) lie on the Extracellular side of the membrane. Position 3 is a sulfotyrosine (Tyr-3). O-linked (GalNAc...) serine glycosylation is found at Ser-6 and Ser-7. Sulfotyrosine is present on residues Tyr-10, Tyr-14, and Tyr-15. Cystine bridges form between Cys-20/Cys-269 and Cys-101/Cys-178. A helical membrane pass occupies residues 31–58 (RLLPPLYSLVFIFGFVGNILVVLILINC). Topologically, residues 59–68 (KRLKSMTDIY) are cytoplasmic. Residues 69-89 (LLNLAISDLFFLLTVPFWAHY) form a helical membrane-spanning segment. Topologically, residues 90 to 102 (AAAQWDFGNTMCQ) are extracellular. A helical membrane pass occupies residues 103 to 124 (LLTGLYFIGFFSGIFFIILLTI). At 125–141 (DRYLAIVHAVFALKART) the chain is on the cytoplasmic side. Residues 142–166 (VTFGVVTSVITWVVAVFASLPGIIF) traverse the membrane as a helical segment. At 167 to 198 (TRSQREGVHYTCSSHFPYSQYQFWKNFQTLKI) the chain is on the extracellular side. Residues 199–218 (VILGLVLPLLVMVICYSGIL) form a helical membrane-spanning segment. At 219–235 (KTLLRCRNEKKRHRAVR) the chain is on the cytoplasmic side. A helical transmembrane segment spans residues 236–260 (LIFTIMIVYFLFWAPYNIVLLLNTF). Residues 261–277 (QEFFGLNNCSSSNRLDQ) are Extracellular-facing. A helical membrane pass occupies residues 278-301 (AMQVTETLGMTHCCINPIIYAFVG). Residues 302 to 352 (EKFRNYLLVFFQKHIAKRFCKCCSIFQQEAPERASSVYTRSTGEQETSVGL) are Cytoplasmic-facing. S-palmitoyl cysteine attachment occurs at residues Cys-321, Cys-323, and Cys-324. Residues Ser-336, Ser-337, Ser-342, and Ser-349 each carry the phosphoserine; by BARK1 modification.

It belongs to the G-protein coupled receptor 1 family. In terms of assembly, interacts with PRAF2. Efficient ligand binding to CCL3/MIP-1alpha and CCL4/MIP-1beta requires sulfation, O-glycosylation and sialic acid modifications. Glycosylation on Ser-6 is required for efficient binding of CCL4. Interacts with GRK2. Interacts with ARRB1 and ARRB2. Interacts with CNIH4. Interacts with S100A4; this interaction stimulates T-lymphocyte chemotaxis. Sulfated on at least 2 of the N-terminal tyrosines. Sulfation is required for efficient binding of the chemokines, CCL3 and CCL4. Post-translationally, palmitoylation in the C-terminal is important for cell surface expression. In terms of processing, phosphorylation on serine residues in the C-terminal is stimulated by binding CC chemokines especially by APO-RANTES. O-glycosylated, but not N-glycosylated. Ser-6 appears to be the major site even if Ser-7 may be also O-glycosylated. Also sialylated glycans present which contribute to chemokine binding. Thr-16 and Ser-17 may also be glycosylated and, if so, with small moieties such as a T-antigen.

It is found in the cell membrane. Functionally, receptor for a number of inflammatory CC-chemokines including CCL3/MIP-1-alpha, CCL4/MIP-1-beta and RANTES and subsequently transduces a signal by increasing the intracellular calcium ion level. May play a role in the control of granulocytic lineage proliferation or differentiation. Participates in T-lymphocyte migration to the infection site by acting as a chemotactic receptor. This is C-C chemokine receptor type 5 (CCR5) from Rhinopithecus avunculus (Tonkin snub-nosed monkey).